Here is a 1567-residue protein sequence, read N- to C-terminus: Transmembrane protein 131 homolog (1567 aa).

The signal sequence occupies residues 1 to 32 (MPTQVQMRPLLRIFAEPILLILIFLFTLGAKG). The Lumenal portion of the chain corresponds to 33–1049 (EKVLQETFLG…RPGWESSLKN (1017 aa)). A papD-L domain region spans residues 55–228 (RLVPSRLDFG…TLKPVIRISF (174 aa)). N-linked (GlcNAc...) asparagine glycans are attached at residues N84, N114, N168, N235, N316, N317, N342, N372, N409, N462, N563, N890, and N1013. The chain crosses the membrane as a helical span at residues 1050–1070 (AALVVLLASFGLVLVAAVFDA). Residues 1071–1567 (KAIMVQQNAY…SQRNNHNHMN (497 aa)) are Cytoplasmic-facing. Positions 1096 to 1130 (RNIVKLQAEEAAAKAESVQQQQKVKNGQLKELRKR) form a coiled coil. 3 disordered regions span residues 1112 to 1337 (SVQQ…SPDA), 1364 to 1386 (PTDN…IGDN), and 1502 to 1567 (PGLE…NHMN). Composition is skewed to low complexity over residues 1132-1150 (VVNS…SPWS) and 1166-1183 (KTVV…APAA). 2 positions are modified to phosphoserine: S1201 and S1258. Positions 1247–1259 (AKSSPPQQENISP) are enriched in polar residues. Residues 1284–1298 (PGRERERERRSKDQK) show a composition bias toward basic and acidic residues. Residues 1319–1331 (KLNFGQTTNSTSP) show a composition bias toward polar residues. Polar residues-rich tracts occupy residues 1507–1519 (SARQ…QEQV) and 1536–1561 (LPTQ…SQRN).

Belongs to the TMEM131 family. In terms of assembly, may interact (via PapD-L domain) with collagen proteins (via C-terminus); the interaction is direct and is involved in assembly and TRAPPIII ER-to-Golgi transport complex-dependent secretion of collagen.

It is found in the membrane. Functionally, collagen binding transmembrane protein involved in collagen secretion, probably by recruiting the ER-to-Golgi transport complex TRAPPIII. The polypeptide is Transmembrane protein 131 homolog (Drosophila melanogaster (Fruit fly)).